The chain runs to 50 residues: Large ribosomal subunit protein eL40 (50 aa).

It belongs to the eukaryotic ribosomal protein eL40 family.

This chain is Large ribosomal subunit protein eL40, found in Aeropyrum pernix (strain ATCC 700893 / DSM 11879 / JCM 9820 / NBRC 100138 / K1).